We begin with the raw amino-acid sequence, 259 residues long: Ribonuclease PH (259 aa).

Residues R88 and 126 to 128 (GTR) each bind phosphate.

This sequence belongs to the RNase PH family. Homohexameric ring arranged as a trimer of dimers.

It catalyses the reaction tRNA(n+1) + phosphate = tRNA(n) + a ribonucleoside 5'-diphosphate. Its function is as follows. Phosphorolytic 3'-5' exoribonuclease that plays an important role in tRNA 3'-end maturation. Removes nucleotide residues following the 3'-CCA terminus of tRNAs; can also add nucleotides to the ends of RNA molecules by using nucleoside diphosphates as substrates, but this may not be physiologically important. Probably plays a role in initiation of 16S rRNA degradation (leading to ribosome degradation) during starvation. The protein is Ribonuclease PH of Mycobacterium bovis (strain BCG / Pasteur 1173P2).